Here is a 1193-residue protein sequence, read N- to C-terminus: DNA-directed RNA polymerase subunit beta (1193 aa).

Over residues 1153–1162 (EMRDLEDDED) the composition is skewed to acidic residues. The interval 1153-1193 (EMRDLEDDEDAKQNEGLSLPNDEESEELVSADAERDVVTKE) is disordered. Over residues 1184–1193 (DAERDVVTKE) the composition is skewed to basic and acidic residues.

The protein belongs to the RNA polymerase beta chain family. As to quaternary structure, the RNAP catalytic core consists of 2 alpha, 1 beta, 1 beta' and 1 omega subunit. When a sigma factor is associated with the core the holoenzyme is formed, which can initiate transcription.

The catalysed reaction is RNA(n) + a ribonucleoside 5'-triphosphate = RNA(n+1) + diphosphate. DNA-dependent RNA polymerase catalyzes the transcription of DNA into RNA using the four ribonucleoside triphosphates as substrates. The protein is DNA-directed RNA polymerase subunit beta of Bacillus licheniformis (strain ATCC 14580 / DSM 13 / JCM 2505 / CCUG 7422 / NBRC 12200 / NCIMB 9375 / NCTC 10341 / NRRL NRS-1264 / Gibson 46).